Consider the following 397-residue polypeptide: Pyruvate dehydrogenase E1 component subunit alpha, mitochondrial (397 aa).

Histidine 98, tyrosine 124, arginine 125, glycine 173, valine 175, aspartate 204, glycine 205, alanine 206, asparagine 233, and tyrosine 235 together coordinate pyruvate. Residues tyrosine 124, arginine 125, glycine 173, valine 175, aspartate 204, glycine 205, alanine 206, and asparagine 233 each coordinate thiamine diphosphate. Residue aspartate 204 coordinates Mg(2+). Asparagine 233 and tyrosine 235 together coordinate Mg(2+). Thiamine diphosphate is bound at residue histidine 299.

Tetramer of 2 alpha and 2 beta subunits. The cofactor is thiamine diphosphate. Requires Mg(2+) as cofactor.

The protein resides in the mitochondrion matrix. It catalyses the reaction N(6)-[(R)-lipoyl]-L-lysyl-[protein] + pyruvate + H(+) = N(6)-[(R)-S(8)-acetyldihydrolipoyl]-L-lysyl-[protein] + CO2. With respect to regulation, E1 activity is regulated by phosphorylation (inactivation) and dephosphorylation (activation) of the alpha subunit. Functionally, the pyruvate dehydrogenase complex catalyzes the overall conversion of pyruvate to acetyl-CoA and CO(2). It contains multiple copies of three enzymatic components: pyruvate dehydrogenase (E1), dihydrolipoamide acetyltransferase (E2) and lipoamide dehydrogenase (E3). This chain is Pyruvate dehydrogenase E1 component subunit alpha, mitochondrial, found in Pisum sativum (Garden pea).